Reading from the N-terminus, the 426-residue chain is Putative F-box protein At4g38870 (426 aa).

The F-box domain occupies 47–92 (SVNSELLPVDLIMEILKKLSLKPLIRFLCVSKLWASIIRDPYFMKL).

This chain is Putative F-box protein At4g38870, found in Arabidopsis thaliana (Mouse-ear cress).